Consider the following 332-residue polypeptide: L-lactate dehydrogenase A chain (332 aa).

An N6-acetyllysine; alternate modification is found at lysine 5. The residue at position 5 (lysine 5) is an N6-succinyllysine; alternate. Lysine 14 carries the post-translational modification N6-acetyllysine. Residue threonine 18 is modified to Phosphothreonine. Position 29–57 (29–57) interacts with NAD(+); the sequence is GAVGMACAISILMKDLADELALVDVIEDK. An N6-acetyllysine; alternate modification is found at lysine 57. A Glycyl lysine isopeptide (Lys-Gly) (interchain with G-Cter in SUMO2); alternate cross-link involves residue lysine 57. Lysine 81 carries the N6-acetyllysine modification. Arginine 99 lines the NAD(+) pocket. Arginine 106 lines the substrate pocket. The residue at position 118 (lysine 118) is an N6-acetyllysine; alternate. Lysine 118 bears the N6-succinyllysine; alternate mark. The residue at position 126 (lysine 126) is an N6-acetyllysine. Asparagine 138 contacts NAD(+). Positions 138 and 169 each coordinate substrate. Histidine 193 functions as the Proton acceptor in the catalytic mechanism. Lysine 232 is subject to N6-acetyllysine. Residue tyrosine 239 is modified to Phosphotyrosine. The residue at position 243 (lysine 243) is an N6-acetyllysine. Threonine 248 is a binding site for substrate. Phosphothreonine occurs at positions 309 and 322.

The protein belongs to the LDH/MDH superfamily. LDH family. As to quaternary structure, homotetramer. Interacts with PTEN upstream reading frame protein MP31. ISGylated.

The protein resides in the cytoplasm. The enzyme catalyses (S)-lactate + NAD(+) = pyruvate + NADH + H(+). The protein operates within fermentation; pyruvate fermentation to lactate; (S)-lactate from pyruvate: step 1/1. Its function is as follows. Interconverts simultaneously and stereospecifically pyruvate and lactate with concomitant interconversion of NADH and NAD(+). The chain is L-lactate dehydrogenase A chain (LDHA) from Monodelphis domestica (Gray short-tailed opossum).